The sequence spans 566 residues: Proline--tRNA ligase (566 aa).

It belongs to the class-II aminoacyl-tRNA synthetase family. ProS type 1 subfamily. In terms of assembly, homodimer.

It localises to the cytoplasm. It carries out the reaction tRNA(Pro) + L-proline + ATP = L-prolyl-tRNA(Pro) + AMP + diphosphate. Catalyzes the attachment of proline to tRNA(Pro) in a two-step reaction: proline is first activated by ATP to form Pro-AMP and then transferred to the acceptor end of tRNA(Pro). As ProRS can inadvertently accommodate and process non-cognate amino acids such as alanine and cysteine, to avoid such errors it has two additional distinct editing activities against alanine. One activity is designated as 'pretransfer' editing and involves the tRNA(Pro)-independent hydrolysis of activated Ala-AMP. The other activity is designated 'posttransfer' editing and involves deacylation of mischarged Ala-tRNA(Pro). The misacylated Cys-tRNA(Pro) is not edited by ProRS. The protein is Proline--tRNA ligase of Exiguobacterium sibiricum (strain DSM 17290 / CCUG 55495 / CIP 109462 / JCM 13490 / 255-15).